The sequence spans 36 residues: Glucagon-1 (36 aa).

This sequence belongs to the glucagon family.

The protein resides in the secreted. In terms of biological role, promotes hydrolysis of glycogen and lipids, and raises the blood sugar level. The protein is Glucagon-1 (gcg1) of Oreochromis niloticus (Nile tilapia).